Reading from the N-terminus, the 1083-residue chain is Error-prone DNA polymerase (1083 aa).

Belongs to the DNA polymerase type-C family. DnaE2 subfamily.

It is found in the cytoplasm. It catalyses the reaction DNA(n) + a 2'-deoxyribonucleoside 5'-triphosphate = DNA(n+1) + diphosphate. Functionally, DNA polymerase involved in damage-induced mutagenesis and translesion synthesis (TLS). It is not the major replicative DNA polymerase. This is Error-prone DNA polymerase from Xanthomonas axonopodis pv. citri (strain 306).